A 275-amino-acid polypeptide reads, in one-letter code: Gamma carbonic anhydrase 1, mitochondrial (275 aa).

Residues 1-43 constitute a mitochondrion transit peptide; sequence MGTLGRAFYSVGFWIRETGQALDRLGCRLQGKNYFREQLSRHR. Residues 86 to 88 and 101 to 102 contribute to the substrate site; these read RGD and QD. Zn(2+) is bound by residues His-107, His-130, and His-135. Substrate is bound at residue Asn-209. Positions 256-275 are disordered; that stretch reads LNLPNNILPDKETKRPSNVN. The segment covering 264-275 has biased composition (basic and acidic residues); the sequence is PDKETKRPSNVN.

Belongs to the gamma-class carbonic anhydrase family. In terms of assembly, homotrimer. Component of the mitochondrial oxidoreductase respiratory chain complex I; element of the extra matrix-exposed domain, which is attached to the membrane arm of this complex. Requires Zn(2+) as cofactor.

It is found in the mitochondrion membrane. Its function is as follows. Enzyme involved in the catabolism of H(2)CO(3) but that does not mediates the reversible hydration of carbon dioxide. Mediates complex I assembly in mitochondria and respiration. The sequence is that of Gamma carbonic anhydrase 1, mitochondrial (GAMMACA1) from Arabidopsis thaliana (Mouse-ear cress).